The following is a 764-amino-acid chain: Ergosteryl-beta-glucosidase (764 aa).

The Nucleophile role is filled by Glu-515. Residues 588–629 form a disordered region; the sequence is HDTRAKTPTPEPSPASTVASVSTSTSKSGSSQPPSFIKPDNH. Residue Thr-594 is modified to Phosphothreonine. A compositionally biased stretch (low complexity) spans 601-622; the sequence is PASTVASVSTSTSKSGSSQPPS.

Belongs to the glycosyl hydrolase 5 (cellulase A) family.

The protein localises to the cytoplasm. The protein resides in the cytosol. It localises to the vacuole membrane. The catalysed reaction is ergosteryl 3-beta-D-glucoside + H2O = ergosterol + D-glucose. Its function is as follows. Ergosteryl beta-glucosidase involved in the ergosteryl beta-glucoside (EG) catabolic pathway and vacuole formation via hydrolysis of EG to generate glucose. Is also able to hydrolyze cholesteryl beta-glucoside and sitosteryl beta-glucoside to generate glucose; and C6-7-nitro-2,1,3-benzoxadiazole (NBD)-GlcCer to generate C6-NBD-ceramide (Cer). This Saccharomyces cerevisiae (strain ATCC 204508 / S288c) (Baker's yeast) protein is Ergosteryl-beta-glucosidase.